The chain runs to 434 residues: CC-adding tRNA nucleotidyltransferase (434 aa).

19–22 (GAVR) serves as a coordination point for CTP. Asp32 and Asp34 together coordinate Mg(2+). Residues 90-91 (RD), Asn95, 130-139 (DHLRSLRGVR), and Arg175 contribute to the CTP site.

This sequence belongs to the tRNA nucleotidyltransferase/poly(A) polymerase family. The cofactor is Mg(2+).

The catalysed reaction is a tRNA precursor + 2 CTP = a tRNA with a 3' CC end + 2 diphosphate. In terms of biological role, tRNA nucleotidyltransferase involved in the synthesis of the tRNA CCA terminus. Adds the two cytidine residues to tRNA. The polypeptide is CC-adding tRNA nucleotidyltransferase (Thermus thermophilus (strain ATCC BAA-163 / DSM 7039 / HB27)).